A 410-amino-acid chain; its full sequence is Argininosuccinate synthase (410 aa).

ATP-binding positions include 13-21 and A40; that span reads AYSGGLDTS. Residues Y91 and S96 each contribute to the L-citrulline site. G121 contributes to the ATP binding site. L-aspartate-binding residues include T123, N127, and D128. N127 lines the L-citrulline pocket. L-citrulline is bound by residues R131, S182, S191, E267, and Y279.

This sequence belongs to the argininosuccinate synthase family. Type 1 subfamily. As to quaternary structure, homotetramer.

Its subcellular location is the cytoplasm. It catalyses the reaction L-citrulline + L-aspartate + ATP = 2-(N(omega)-L-arginino)succinate + AMP + diphosphate + H(+). It functions in the pathway amino-acid biosynthesis; L-arginine biosynthesis; L-arginine from L-ornithine and carbamoyl phosphate: step 2/3. In Gluconobacter oxydans (strain 621H) (Gluconobacter suboxydans), this protein is Argininosuccinate synthase.